A 180-amino-acid chain; its full sequence is ATP-dependent protease subunit HslV (180 aa).

Thr7 is an active-site residue. Ala165, Cys168, and Thr171 together coordinate Na(+).

The protein belongs to the peptidase T1B family. HslV subfamily. In terms of assembly, a double ring-shaped homohexamer of HslV is capped on each side by a ring-shaped HslU homohexamer. The assembly of the HslU/HslV complex is dependent on binding of ATP.

The protein resides in the cytoplasm. The catalysed reaction is ATP-dependent cleavage of peptide bonds with broad specificity.. Its activity is regulated as follows. Allosterically activated by HslU binding. Functionally, protease subunit of a proteasome-like degradation complex believed to be a general protein degrading machinery. This Geobacillus sp. (strain WCH70) protein is ATP-dependent protease subunit HslV.